We begin with the raw amino-acid sequence, 530 residues long: Cytochrome P450 2U1 (530 aa).

4 helical membrane-spanning segments follow: residues 21-41, 99-119, 247-267, and 328-348; these read LQAV…DWVW, VYGN…LSDF, ICLH…YLPF, and LFYI…NSLL. Cys-476 provides a ligand contact to heme. The chain crosses the membrane as a helical span at residues 481–501; sequence LAKMELFLMFVSLMQSFTFAL.

The protein belongs to the cytochrome P450 family. Requires heme as cofactor. Specifically expressed in thymus and brain. In brain, expressed in cortex, cerebellum, olfactory bulbs, pons and medulla and the limbic structures (at protein level).

The protein resides in the endoplasmic reticulum membrane. The protein localises to the microsome membrane. It localises to the mitochondrion inner membrane. The enzyme catalyses an omega-methyl-long-chain fatty acid + reduced [NADPH--hemoprotein reductase] + O2 = an omega-hydroxy-long-chain fatty acid + oxidized [NADPH--hemoprotein reductase] + H2O + H(+). It carries out the reaction (5Z,8Z,11Z,14Z)-eicosatetraenoate + reduced [NADPH--hemoprotein reductase] + O2 = 19-hydroxy-(5Z,8Z,11Z,14Z)-eicosatetraenoate + oxidized [NADPH--hemoprotein reductase] + H2O + H(+). The catalysed reaction is (5Z,8Z,11Z,14Z)-eicosatetraenoate + reduced [NADPH--hemoprotein reductase] + O2 = 20-hydroxy-(5Z,8Z,11Z,14Z)-eicosatetraenoate + oxidized [NADPH--hemoprotein reductase] + H2O + H(+). It catalyses the reaction N-[(5Z,8Z,11Z,14Z)-eicosatetraenoyl]-serotonin + reduced [NADPH--hemoprotein reductase] + O2 = 2-oxo-N-[(5Z,8Z,11Z,14Z)-eicosatetraenoyl]-serotonin + oxidized [NADPH--hemoprotein reductase] + H2O + H(+). Functionally, a cytochrome P450 monooxygenase involved in the metabolism of arachidonic acid and its conjugates. Mechanistically, uses molecular oxygen inserting one oxygen atom into a substrate, and reducing the second into a water molecule, with two electrons provided by NADPH via cytochrome P450 reductase (CPR; NADPH-ferrihemoprotein reductase). Acts as an omega and omega-1 hydroxylase for arachidonic acid and possibly for other long chain fatty acids. May modulate the arachidonic acid signaling pathway and play a role in other fatty acid signaling processes. May down-regulate the biological activities of N-arachidonoyl-serotonin, an endocannabinoid that has anti-nociceptive effects through inhibition of fatty acid amide hydrolase FAAH, TRPV1 receptor and T-type calcium channels. Catalyzes C-2 oxidation of the indole ring of N-arachidonoyl-serotonin forming a less active product 2-oxo-N-arachidonoyl-serotonin. This Rattus norvegicus (Rat) protein is Cytochrome P450 2U1 (Cyp2u1).